Consider the following 832-residue polypeptide: Valine--tRNA ligase (832 aa).

The 'HIGH' region motif lies at 41-51 (PNVTGKLHLGH). Positions 512–516 (KMSKS) match the 'KMSKS' region motif. Lys-515 provides a ligand contact to ATP. The stretch at 760-831 (FIEISQEQKQ…QIYLEELKWK (72 aa)) forms a coiled coil.

The protein belongs to the class-I aminoacyl-tRNA synthetase family. ValS type 1 subfamily. Monomer.

It localises to the cytoplasm. The catalysed reaction is tRNA(Val) + L-valine + ATP = L-valyl-tRNA(Val) + AMP + diphosphate. Functionally, catalyzes the attachment of valine to tRNA(Val). As ValRS can inadvertently accommodate and process structurally similar amino acids such as threonine, to avoid such errors, it has a 'posttransfer' editing activity that hydrolyzes mischarged Thr-tRNA(Val) in a tRNA-dependent manner. The polypeptide is Valine--tRNA ligase (Mycoplasmopsis synoviae (strain 53) (Mycoplasma synoviae)).